We begin with the raw amino-acid sequence, 409 residues long: LysM domain-containing GPI-anchored protein LYP6 (409 aa).

A signal peptide spans 1-27 (MAGWPAAEAAGALVVAILAAAAGGAAG). Intrachain disulfides connect Cys-34–Cys-100, Cys-40–Cys-166, Cys-98–Cys-164, and Cys-100–Cys-166. The LysM 1 domain occupies 110–160 (VRYSARPADTLASVADVVFAGLASADQIRTANGLSAEDPDAPLDAGATLVV). An N-linked (GlcNAc...) asparagine glycan is attached at Asn-168. The 44-residue stretch at 179 to 222 (LSYVVRVGDTVQSIAATHATTVTDISNVNAMGSPIVAPGDILAI) folds into the LysM 2 domain. Intrachain disulfides connect Cys-227–Cys-259 and Cys-254–Cys-282. Residue Asn-244 is glycosylated (N-linked (GlcNAc...) asparagine). N-linked (GlcNAc...) asparagine glycosylation is found at Asn-291, Asn-302, and Asn-313. Residues 353–387 (SPAPGAGEAGGDIPGFPGSSNVSPANGPSGSVSQA) form a disordered region. A compositionally biased stretch (polar residues) spans 370–387 (GSSNVSPANGPSGSVSQA). Ala-387 carries GPI-anchor amidated alanine lipidation. Positions 388 to 409 (ASVNRPHQIVALILSVALYFQM) are cleaved as a propeptide — removed in mature form.

Interacts with LYP4. Interacts with CERK1. Interacts with CEBIP. Expressed in roots and leaves.

The protein localises to the cell membrane. Its function is as follows. Functions in innate immunity. Functions as a pattern recognition receptor (PRR), sensing bacterial peptidoglycan (PGN) and fungal chitin at the cell surface. Involved in resistance against the bacterial pathogen Xanthomonas oryzae pv. oryzae (Xoo) and the fungal pathogen Magnaporthe oryzae. Binds PGN and fungal chitin in vitro. Involved in microbe-associated molecular patterns (MAMPs) perception and participates in the activation of defense genes against the bacterial pathogen Xanthomonas oryzae pv. oryzicola (Xoc) or the fungal pathogen Magnaporthe oryzae. The polypeptide is LysM domain-containing GPI-anchored protein LYP6 (Oryza sativa subsp. japonica (Rice)).